We begin with the raw amino-acid sequence, 433 residues long: Dihydroorotase (433 aa).

Residues His63 and His65 each coordinate Zn(2+). Residues 65–67 and Asn97 each bind substrate; that span reads HLR. Zn(2+) contacts are provided by Asp155, His182, and His235. Position 283 (Asn283) interacts with substrate. Asp310 provides a ligand contact to Zn(2+). Residue Asp310 is part of the active site. A substrate-binding site is contributed by His314.

Belongs to the metallo-dependent hydrolases superfamily. DHOase family. Class I DHOase subfamily. It depends on Zn(2+) as a cofactor.

It carries out the reaction (S)-dihydroorotate + H2O = N-carbamoyl-L-aspartate + H(+). It participates in pyrimidine metabolism; UMP biosynthesis via de novo pathway; (S)-dihydroorotate from bicarbonate: step 3/3. In terms of biological role, catalyzes the reversible cyclization of carbamoyl aspartate to dihydroorotate. This chain is Dihydroorotase, found in Anaeromyxobacter sp. (strain K).